A 122-amino-acid polypeptide reads, in one-letter code: Large ribosomal subunit protein uL14 (122 aa).

It belongs to the universal ribosomal protein uL14 family. As to quaternary structure, part of the 50S ribosomal subunit. Forms a cluster with proteins L3 and L19. In the 70S ribosome, L14 and L19 interact and together make contacts with the 16S rRNA in bridges B5 and B8.

Its function is as follows. Binds to 23S rRNA. Forms part of two intersubunit bridges in the 70S ribosome. The chain is Large ribosomal subunit protein uL14 from Rickettsia typhi (strain ATCC VR-144 / Wilmington).